The primary structure comprises 461 residues: Phosphomethylpyrimidine synthase (461 aa).

Residues Asn-80, Met-109, Tyr-139, His-175, 195–197 (SRG), 236–239 (DSLR), and Glu-275 contribute to the substrate site. His-279 contributes to the Zn(2+) binding site. Tyr-302 serves as a coordination point for substrate. Residue His-343 coordinates Zn(2+). The [4Fe-4S] cluster site is built by Cys-423, Cys-426, and Cys-431.

It belongs to the ThiC family. Requires [4Fe-4S] cluster as cofactor.

It carries out the reaction 5-amino-1-(5-phospho-beta-D-ribosyl)imidazole + S-adenosyl-L-methionine = 4-amino-2-methyl-5-(phosphooxymethyl)pyrimidine + CO + 5'-deoxyadenosine + formate + L-methionine + 3 H(+). It participates in cofactor biosynthesis; thiamine diphosphate biosynthesis. In terms of biological role, catalyzes the synthesis of the hydroxymethylpyrimidine phosphate (HMP-P) moiety of thiamine from aminoimidazole ribotide (AIR) in a radical S-adenosyl-L-methionine (SAM)-dependent reaction. This is Phosphomethylpyrimidine synthase from Picosynechococcus sp. (strain ATCC 27264 / PCC 7002 / PR-6) (Agmenellum quadruplicatum).